The following is a 315-amino-acid chain: Small ribosomal subunit biogenesis GTPase RsgA (315 aa).

In terms of domain architecture, CP-type G spans 79–243 (LSKESHILGA…LIDTPGIKGF (165 aa)). Residues 128 to 131 (NKID) and 182 to 190 (GHSGVGKSS) each bind GTP. Cys-267, Cys-272, His-274, and Cys-280 together coordinate Zn(2+).

Belongs to the TRAFAC class YlqF/YawG GTPase family. RsgA subfamily. Monomer. Associates with 30S ribosomal subunit, binds 16S rRNA. Requires Zn(2+) as cofactor.

Its subcellular location is the cytoplasm. Functionally, one of several proteins that assist in the late maturation steps of the functional core of the 30S ribosomal subunit. Helps release RbfA from mature subunits. May play a role in the assembly of ribosomal proteins into the subunit. Circularly permuted GTPase that catalyzes slow GTP hydrolysis, GTPase activity is stimulated by the 30S ribosomal subunit. The polypeptide is Small ribosomal subunit biogenesis GTPase RsgA (Porphyromonas gingivalis (strain ATCC 33277 / DSM 20709 / CIP 103683 / JCM 12257 / NCTC 11834 / 2561)).